Reading from the N-terminus, the 439-residue chain is Signal recognition particle 54 kDa protein (439 aa).

GTP contacts are provided by residues 104–111 (GLQGSGKT), 184–188 (DTAGR), and 242–245 (SKLD).

Belongs to the GTP-binding SRP family. SRP54 subfamily. As to quaternary structure, part of the signal recognition particle protein translocation system, which is composed of SRP and FtsY. Archaeal SRP consists of a 7S RNA molecule of 300 nucleotides and two protein subunits: SRP54 and SRP19.

The protein localises to the cytoplasm. The catalysed reaction is GTP + H2O = GDP + phosphate + H(+). Functionally, involved in targeting and insertion of nascent membrane proteins into the cytoplasmic membrane. Binds to the hydrophobic signal sequence of the ribosome-nascent chain (RNC) as it emerges from the ribosomes. The SRP-RNC complex is then targeted to the cytoplasmic membrane where it interacts with the SRP receptor FtsY. In Methanococcoides burtonii (strain DSM 6242 / NBRC 107633 / OCM 468 / ACE-M), this protein is Signal recognition particle 54 kDa protein.